A 139-amino-acid polypeptide reads, in one-letter code: Self-incompatibility protein S1 (139 aa).

Residues 1–19 form the signal peptide; it reads MNIFYVIVLLSFFLSKSSG. N-linked (GlcNAc...) asparagine glycosylation occurs at Asn-51.

The protein belongs to the plant self-incompatibility (S1) protein family. In terms of processing, glycosylated (S1b) and unglocosylated (S1a) forms coexist. As to expression, accumulates in the stigma (at protein level).

It localises to the secreted. Functionally, exhibits specific pollen self-inhibitory activity thus preventing self-fertilization. The sequence is that of Self-incompatibility protein S1 from Papaver rhoeas (Common poppy).